The primary structure comprises 176 residues: Ribosome maturation factor RimM (176 aa).

In terms of domain architecture, PRC barrel spans 99–176 (EDEYYWSDLV…RMVVDWERDF (78 aa)).

It belongs to the RimM family. As to quaternary structure, binds ribosomal protein uS19.

Its subcellular location is the cytoplasm. An accessory protein needed during the final step in the assembly of 30S ribosomal subunit, possibly for assembly of the head region. Essential for efficient processing of 16S rRNA. May be needed both before and after RbfA during the maturation of 16S rRNA. It has affinity for free ribosomal 30S subunits but not for 70S ribosomes. The sequence is that of Ribosome maturation factor RimM from Psychrobacter sp. (strain PRwf-1).